We begin with the raw amino-acid sequence, 276 residues long: Nuclear egress protein 2 (276 aa).

The Perinuclear space portion of the chain corresponds to 1 to 245 (MANVLKEKMY…FWRLSERHCR (245 aa)). Residues 246-264 (FALVGICFLLALYFCYVLL) form a helical membrane-spanning segment. Residues 265–276 (KKTPTPASGSVV) are Nuclear-facing.

Belongs to the herpesviridae NEC2 protein family. As to quaternary structure, forms a heterohexameric complex with NEC1. Post-translationally, phosphorylated.

The protein localises to the host nucleus inner membrane. Plays an essential role in virion nuclear egress, the first step of virion release from infected cell. Within the host nucleus, NEC1 interacts with the newly formed capsid through the vertexes and directs it to the inner nuclear membrane by associating with NEC2. Induces the budding of the capsid at the inner nuclear membrane as well as its envelopment into the perinuclear space. There, the NEC1/NEC2 complex promotes the fusion of the enveloped capsid with the outer nuclear membrane and the subsequent release of the viral capsid into the cytoplasm where it will reach the secondary budding sites in the host Golgi or trans-Golgi network. The protein is Nuclear egress protein 2 of Homo sapiens (Human).